The sequence spans 439 residues: GTPase Der (439 aa).

EngA-type G domains follow at residues 4–168 and 177–352; these read PIVA…KDDE and INIA…DNYN. Residues 10-17, 57-61, 120-123, 183-190, 230-234, and 295-298 contribute to the GTP site; these read GRPNVGKS, DTGGI, NKID, GKPNVGKS, DTAGL, and NKWD. The KH-like domain maps to 353–437; that stretch reads KRVKTGVLND…GIKSEFRERK (85 aa).

The protein belongs to the TRAFAC class TrmE-Era-EngA-EngB-Septin-like GTPase superfamily. EngA (Der) GTPase family. Associates with the 50S ribosomal subunit.

In terms of biological role, GTPase that plays an essential role in the late steps of ribosome biogenesis. The polypeptide is GTPase Der (Clostridium botulinum (strain ATCC 19397 / Type A)).